Here is a 250-residue protein sequence, read N- to C-terminus: AA9 family lytic polysaccharide monooxygenase E (250 aa).

The signal sequence occupies residues 1–21 (MAMSKIMSLTGLLASASLVAG). Cu(2+) is bound by residues His22 and His107. Disulfide bonds link Cys77–Cys199 and Cys118–Cys122. Asn159 carries an N-linked (GlcNAc...) asparagine glycan. O2 contacts are provided by His185 and Gln194. Tyr196 is a binding site for Cu(2+).

This sequence belongs to the polysaccharide monooxygenase AA9 family. The cofactor is Cu(2+).

The protein resides in the secreted. The catalysed reaction is [(1-&gt;4)-beta-D-glucosyl]n+m + reduced acceptor + O2 = 4-dehydro-beta-D-glucosyl-[(1-&gt;4)-beta-D-glucosyl]n-1 + [(1-&gt;4)-beta-D-glucosyl]m + acceptor + H2O.. Its function is as follows. Lytic polysaccharide monooxygenase (LPMO) that depolymerizes crystalline and amorphous polysaccharides via the oxidation of scissile alpha- or beta-(1-4)-glycosidic bonds, yielding C1 or C4 oxidation products. Catalysis by LPMOs requires the reduction of the active-site copper from Cu(II) to Cu(I) by a reducing agent and H(2)O(2) or O(2) as a cosubstrate. The sequence is that of AA9 family lytic polysaccharide monooxygenase E from Aspergillus tamarii.